A 209-amino-acid chain; its full sequence is Large ribosomal subunit protein uL3 (209 aa).

Gln-150 is modified (N5-methylglutamine).

The protein belongs to the universal ribosomal protein uL3 family. Part of the 50S ribosomal subunit. Forms a cluster with proteins L14 and L19. In terms of processing, methylated by PrmB.

In terms of biological role, one of the primary rRNA binding proteins, it binds directly near the 3'-end of the 23S rRNA, where it nucleates assembly of the 50S subunit. This chain is Large ribosomal subunit protein uL3, found in Klebsiella pneumoniae (strain 342).